The primary structure comprises 238 residues: NADH-quinone oxidoreductase subunit C (238 aa).

The interval 1 to 20 (MSSPDQNPSDAAGQTGSSNE) is disordered.

This sequence belongs to the complex I 30 kDa subunit family. NDH-1 is composed of 14 different subunits. Subunits NuoB, C, D, E, F, and G constitute the peripheral sector of the complex.

It localises to the cell membrane. It carries out the reaction a quinone + NADH + 5 H(+)(in) = a quinol + NAD(+) + 4 H(+)(out). NDH-1 shuttles electrons from NADH, via FMN and iron-sulfur (Fe-S) centers, to quinones in the respiratory chain. The immediate electron acceptor for the enzyme in this species is believed to be a menaquinone. Couples the redox reaction to proton translocation (for every two electrons transferred, four hydrogen ions are translocated across the cytoplasmic membrane), and thus conserves the redox energy in a proton gradient. This chain is NADH-quinone oxidoreductase subunit C, found in Mycobacterium ulcerans (strain Agy99).